The following is a 474-amino-acid chain: Protein FAM161A (474 aa).

3 disordered regions span residues 78–126 (SSSS…PGEI), 185–210 (QKRR…DDAE), and 308–364 (REEL…DQGL). Residues 188–250 (REKASDAQET…KKTRERSKAA (63 aa)) adopt a coiled-coil conformation. The tract at residues 274-454 (KLRELCRAKK…PTASSRGREQ (181 aa)) is required for interaction with CFAP418. A compositionally biased stretch (polar residues) spans 325-335 (LQSSPWPSHST). Glycyl lysine isopeptide (Lys-Gly) (interchain with G-Cter in SUMO2) cross-links involve residues lysine 397 and lysine 413. Positions 412–474 (LKETRRPNPS…KELARIGGAR (63 aa)) are disordered. Over residues 422–431 (PRHKSPRRSA) the composition is skewed to basic residues. The span at 450–468 (RGREQAIRRSEKARMKELA) shows a compositional bias: basic and acidic residues.

This sequence belongs to the FAM161 family. As to quaternary structure, interacts (via central region) with CFAP418 (via N-terminus); the interaction is direct. Interacts (via C-terminus) with microtubules. Interacts with LCA5. Interacts with CEP290. Interacts with SDCCAG8. Interacts with FAM161B. Interacts with POC1B. Interacts with CEP78. Forms a microtubule-associated complex with POC5, CETN2 and POC1B. Interacts with CCDC15. As to expression, expressed in the retina and kidney.

The protein localises to the cytoplasm. Its subcellular location is the cytoskeleton. It is found in the cilium basal body. It localises to the cell projection. The protein resides in the cilium. The protein localises to the microtubule organizing center. Its subcellular location is the centrosome. It is found in the centriole. Functionally, involved in ciliogenesis. The protein is Protein FAM161A of Rattus norvegicus (Rat).